The chain runs to 295 residues: Phosphoserine phosphatase, chloroplastic (295 aa).

Residues 1–54 (MEALTTSRVVPVQVPCRKLSSLFANFSCLELRRYPCRGLVSIMNHPKLLRPVTA) constitute a chloroplast transit peptide. Asp89 acts as the Nucleophile in catalysis. Positions 89 and 91 each coordinate Mg(2+). The Proton donor role is filled by Asp91. Residues Glu98, Arg134, 178–179 (SG), and Lys227 each bind substrate. Asp248 is a binding site for Mg(2+).

This sequence belongs to the HAD-like hydrolase superfamily. SerB family. It depends on Mg(2+) as a cofactor. As to expression, ubiquitous. Mainly expressed in shoot and root meristems, vasculature, pollen, anthers, carpels and seeds.

The protein resides in the plastid. It localises to the chloroplast. It catalyses the reaction O-phospho-L-serine + H2O = L-serine + phosphate. It carries out the reaction O-phospho-D-serine + H2O = D-serine + phosphate. The protein operates within amino-acid biosynthesis; L-serine biosynthesis; L-serine from 3-phospho-D-glycerate: step 3/3. Approximately 60% inhibition of PSP activity is observed in presence of 10 mM serine. In terms of biological role, catalyzes the last step in the plastidial phosphorylated pathway of serine biosynthesis (PPSB). The reaction mechanism proceeds via the formation of a phosphoryl-enzyme intermediates. Required for embryo, pollen and root development. May be required preferentially for serine biosynthesis in non-photosynthetic tissues. This is Phosphoserine phosphatase, chloroplastic (PSP) from Arabidopsis thaliana (Mouse-ear cress).